The primary structure comprises 247 residues: Trypsin-4 (247 aa).

The first 15 residues, Met-1 to Ala-15, serve as a signal peptide directing secretion. The propeptide at Leu-16–Lys-23 is activation peptide. The Peptidase S1 domain occupies Ile-24–Ala-245. 6 disulfide bridges follow: Cys-30-Cys-161, Cys-49-Cys-65, Cys-133-Cys-234, Cys-140-Cys-207, Cys-172-Cys-186, and Cys-197-Cys-221. The active-site Charge relay system is the His-64. Residues Glu-76, Asn-78, Val-81, and Glu-86 each coordinate Ca(2+). Asp-108 functions as the Charge relay system in the catalytic mechanism. Ser-201 serves as the catalytic Charge relay system.

It belongs to the peptidase S1 family. It depends on Ca(2+) as a cofactor. Post-translationally, proteolytically cleaved and activated by an autocatalytic mechanism. Cleavage by CTRC inhibits autoactivation.

It is found in the secreted. The protein localises to the extracellular space. The catalysed reaction is Preferential cleavage: Arg-|-Xaa, Lys-|-Xaa.. Its activity is regulated as follows. Activated by autocatalytic cleavage. Cleavage by CTRC inhibits autoactivation. Functionally, serine protease capable of autoactivation. In Rattus norvegicus (Rat), this protein is Trypsin-4.